Reading from the N-terminus, the 355-residue chain is tRNA-specific 2-thiouridylase MnmA (355 aa).

Residues alanine 6 to serine 13 and methionine 32 each bind ATP. The Nucleophile role is filled by cysteine 93. Residues cysteine 93 and cysteine 191 are joined by a disulfide bond. Glycine 117 lines the ATP pocket. The segment at lysine 140 to glutamine 142 is interaction with tRNA. Cysteine 191 serves as the catalytic Cysteine persulfide intermediate. An interaction with tRNA region spans residues arginine 296–tyrosine 297.

This sequence belongs to the MnmA/TRMU family.

Its subcellular location is the cytoplasm. It catalyses the reaction S-sulfanyl-L-cysteinyl-[protein] + uridine(34) in tRNA + AH2 + ATP = 2-thiouridine(34) in tRNA + L-cysteinyl-[protein] + A + AMP + diphosphate + H(+). In terms of biological role, catalyzes the 2-thiolation of uridine at the wobble position (U34) of tRNA, leading to the formation of s(2)U34. This chain is tRNA-specific 2-thiouridylase MnmA, found in Pelobacter propionicus (strain DSM 2379 / NBRC 103807 / OttBd1).